Consider the following 244-residue polypeptide: NAD(P)H-quinone oxidoreductase subunit K (244 aa).

[4Fe-4S] cluster contacts are provided by Cys60, Cys61, Cys125, and Cys156.

It belongs to the complex I 20 kDa subunit family. NDH-1 can be composed of about 15 different subunits; different subcomplexes with different compositions have been identified which probably have different functions. [4Fe-4S] cluster is required as a cofactor.

The protein resides in the cellular thylakoid membrane. The catalysed reaction is a plastoquinone + NADH + (n+1) H(+)(in) = a plastoquinol + NAD(+) + n H(+)(out). It carries out the reaction a plastoquinone + NADPH + (n+1) H(+)(in) = a plastoquinol + NADP(+) + n H(+)(out). NDH-1 shuttles electrons from an unknown electron donor, via FMN and iron-sulfur (Fe-S) centers, to quinones in the respiratory and/or the photosynthetic chain. The immediate electron acceptor for the enzyme in this species is believed to be plastoquinone. Couples the redox reaction to proton translocation, and thus conserves the redox energy in a proton gradient. Cyanobacterial NDH-1 also plays a role in inorganic carbon-concentration. This chain is NAD(P)H-quinone oxidoreductase subunit K, found in Prochlorococcus marinus (strain MIT 9515).